We begin with the raw amino-acid sequence, 228 residues long: Phosphoribosylformylglycinamidine synthase subunit PurQ (228 aa).

In terms of domain architecture, Glutamine amidotransferase type-1 spans 3-226 (FAVIVFPGSN…VNYWRETHVV (224 aa)). Residue Cys86 is the Nucleophile of the active site. Catalysis depends on residues His195 and Glu197.

In terms of assembly, part of the FGAM synthase complex composed of 1 PurL, 1 PurQ and 2 PurS subunits.

Its subcellular location is the cytoplasm. It catalyses the reaction N(2)-formyl-N(1)-(5-phospho-beta-D-ribosyl)glycinamide + L-glutamine + ATP + H2O = 2-formamido-N(1)-(5-O-phospho-beta-D-ribosyl)acetamidine + L-glutamate + ADP + phosphate + H(+). The catalysed reaction is L-glutamine + H2O = L-glutamate + NH4(+). The protein operates within purine metabolism; IMP biosynthesis via de novo pathway; 5-amino-1-(5-phospho-D-ribosyl)imidazole from N(2)-formyl-N(1)-(5-phospho-D-ribosyl)glycinamide: step 1/2. Part of the phosphoribosylformylglycinamidine synthase complex involved in the purines biosynthetic pathway. Catalyzes the ATP-dependent conversion of formylglycinamide ribonucleotide (FGAR) and glutamine to yield formylglycinamidine ribonucleotide (FGAM) and glutamate. The FGAM synthase complex is composed of three subunits. PurQ produces an ammonia molecule by converting glutamine to glutamate. PurL transfers the ammonia molecule to FGAR to form FGAM in an ATP-dependent manner. PurS interacts with PurQ and PurL and is thought to assist in the transfer of the ammonia molecule from PurQ to PurL. The protein is Phosphoribosylformylglycinamidine synthase subunit PurQ of Geobacillus thermodenitrificans (strain NG80-2).